A 113-amino-acid chain; its full sequence is N(2)-fixation sustaining protein CowN (113 aa).

It belongs to the CowN family.

In terms of biological role, is required to sustain N(2)-dependent growth in the presence of low levels of carbon monoxide (CO). Probably acts by protecting the N(2) fixation ability of the nitrogenase complex, which is inactivated in the presence of CO. This chain is N(2)-fixation sustaining protein CowN, found in Wolinella succinogenes (strain ATCC 29543 / DSM 1740 / CCUG 13145 / JCM 31913 / LMG 7466 / NCTC 11488 / FDC 602W) (Vibrio succinogenes).